The chain runs to 623 residues: Regulatory solute carrier protein family 1 member 1 (623 aa).

Composition is skewed to polar residues over residues 1–16, 83–99, and 133–144; these read MSSL…QAHP, CASS…PAIP, and EASLSVTTTRMQ. Disordered regions lie at residues 1–48, 71–99, 116–189, and 433–493; these read MSSL…PDSI, RKEQ…PAIP, SAEG…APHD, and EELT…PHCT. 3 stretches are compositionally biased toward basic and acidic residues: residues 150–159, 170–180, and 460–473; these read IGEKGWHPEY, QHEEPRNEQHE, and LVDK…RESV. The segment covering 474–491 has biased composition (polar residues); it reads NESSLVTLDSAKTSNQPH. A UBA domain is found at 577–617; the sequence is IFPAADIDRILRAGFTLQEALGALHRVGGNADLALLVLLAK.

As to quaternary structure, interacts with YRDC. In terms of tissue distribution, renal outer cortex and outer medulla, small intestine and liver.

It localises to the cell membrane. It is found in the nucleus. The protein resides in the golgi apparatus. The protein localises to the trans-Golgi network. Functionally, mediates transcriptional and post-transcriptional regulation of SLC5A1. Inhibits a dynamin and PKC-dependent exocytotic pathway of SLC5A1. Also involved in transcriptional regulation of SLC22A2. Exhibits glucose-dependent, short-term inhibition of SLC5A1 and SLC22A2 by inhibiting the release of vesicles from the trans-Golgi network. The chain is Regulatory solute carrier protein family 1 member 1 (RSC1A1) from Sus scrofa (Pig).